The primary structure comprises 237 residues: Ribonuclease 3 (237 aa).

The region spanning 3–133 (SRQPLLDALG…LLGAIYLQHG (131 aa)) is the RNase III domain. Glutamate 43 lines the Mg(2+) pocket. Residue aspartate 47 is part of the active site. Aspartate 119 and glutamate 122 together coordinate Mg(2+). Residue glutamate 122 is part of the active site. One can recognise a DRBM domain in the interval 160 to 228 (DWKTSLQELT…AAATWKALDV (69 aa)).

It belongs to the ribonuclease III family. As to quaternary structure, homodimer. Mg(2+) is required as a cofactor.

Its subcellular location is the cytoplasm. It catalyses the reaction Endonucleolytic cleavage to 5'-phosphomonoester.. In terms of biological role, digests double-stranded RNA. Involved in the processing of primary rRNA transcript to yield the immediate precursors to the large and small rRNAs (23S and 16S). Processes some mRNAs, and tRNAs when they are encoded in the rRNA operon. Processes pre-crRNA and tracrRNA of type II CRISPR loci if present in the organism. The sequence is that of Ribonuclease 3 from Mycolicibacterium paratuberculosis (strain ATCC BAA-968 / K-10) (Mycobacterium paratuberculosis).